Consider the following 177-residue polypeptide: Cytoglobin-1 (177 aa).

The 150-residue stretch at 16–165 (PLTDKERVMI…LCCSIKAVYE (150 aa)) folds into the Globin domain. Residues His-79 and His-111 each coordinate heme b.

It belongs to the globin family. Monomeric.

Its subcellular location is the cytoplasm. The protein resides in the nucleus. It carries out the reaction Fe(II)-heme b-[protein] + nitric oxide + O2 = Fe(III)-heme b-[protein] + nitrate. The catalysed reaction is Fe(III)-heme b-[protein] + nitric oxide + H2O = Fe(II)-heme b-[protein] + nitrite + 2 H(+). The enzyme catalyses 2 superoxide + 2 H(+) = H2O2 + O2. It catalyses the reaction H2O2 + AH2 = A + 2 H2O. In terms of biological role, probable multifunctional globin with a hexacoordinated heme iron required for the catalysis of various reactions depending on redox condition of the cell as well as oxygen availability. Has a nitric oxide dioxygenase (NOD) activity and is most probably involved in cell-mediated and oxygen-dependent nitric oxide consumption. Under normoxic conditions functions as a nitric oxide dioxygenase (NOD) but under hypoxic conditions the globin may switch its function to that of a nitrite (NO2) reductase (NiR), generating nitric oxide. Could also have peroxidase and superoxide dismutase activities, detoxifying reactive oxygen species and protecting cells against oxidative stress. Also binds dioxygen with low affinity and could function as an oxygen sensor but has probably no function as a respiratory oxygen carrier. This is Cytoglobin-1 from Oryzias latipes (Japanese rice fish).